We begin with the raw amino-acid sequence, 2294 residues long: Reducing polyketide synthase BOA9 (2294 aa).

The region spanning 4-409 (PEPVAIIGMG…GANATAIVEA (406 aa)) is the Ketosynthase family 3 (KS3) domain. The tract at residues 537–853 (IFTGQGAQNA…DYAATLVRGQ (317 aa)) is malonyl-CoA:ACP transacylase (MAT) domain. Serine 630 functions as the For malonyltransferase activity in the catalytic mechanism. The tract at residues 930-1067 (HDLLGAILPG…GTVTKKKAVT (138 aa)) is N-terminal hotdog fold. Residues 930–1104 (HDLLGAILPG…LNYGPAFNGL (175 aa)) form a dehydratase (DH) domain region. The 307-residue stretch at 930-1236 (HDLLGAILPG…CTQYSEALDD (307 aa)) folds into the PKS/mFAS DH domain. Histidine 962 (proton acceptor; for dehydratase activity) is an active-site residue. The C-terminal hotdog fold stretch occupies residues 1078–1236 (QEPKAARTWY…CTQYSEALDD (159 aa)). Catalysis depends on aspartate 1142, which acts as the Proton donor; for dehydratase activity. Residues 1618-1908 (GIFDTIHFKD…KNSRIGRVVV (291 aa)) are enoyl reductase (ER) domain. Positions 1934–2107 (VHTYLLGVLE…LPATTISLTV (174 aa)) are ketoreductase (KR) domain. In terms of domain architecture, Carrier spans 2214 to 2292 (LLLPDILEMI…SLAKKIYDIR (79 aa)). O-(pantetheine 4'-phosphoryl)serine is present on serine 2251.

It participates in polyketide biosynthesis. Reducing polyketide synthase; part of the gene cluster B that mediates the biosynthesis of botcinic acid and its botcinin derivatives, acetate-derived polyketides that contribute to virulence when combined with the sesquiterpene botrydial. Botcinic acid and its derivatives have been shown to induce chlorosis and necrosis during host plant infection, but also have antifungal activities. Two polyketide synthases, BOA6 and BOA9, are involved in the biosynthesis of botcinins. BOA6 mediates the formation of the per-methylated tetraketide core by condensation of four units of malonyl-CoA with one unit of acetyl-CoA, which would be methylated in activated methylene groups to yield a bicyclic acid intermediate that could then either be converted to botrylactone derivatives or lose the starter acetate unit through a retro-Claisen type C-C bond cleavage to yield botcinin derivatives. The second polyketide synthase, BOA9, is probably required for the biosynthesis of the tetraketide side chain of botcinins. The methyltransferase (MT) domain within BOA6 is probably responsible for the incorporation of four methyl groups. The trans-enoyl reductase BOA5 might take over the enoyl reductase function of BOA6 that misses an ER domain. The monooxygenases BOA2, BOA3 and BOA4 might be involved in further hydroxylations at C4, C5 and C8, whereas BOA7, close to BOA9, could potentially be involved in the hydroxylation at C4 in the side chain of botcinins. The protein is Reducing polyketide synthase BOA9 of Botryotinia fuckeliana (strain B05.10) (Noble rot fungus).